We begin with the raw amino-acid sequence, 905 residues long: NADH-quinone oxidoreductase subunit G (905 aa).

Residues 1 to 83 (MATIHVDGKT…NTWISIEDEE (83 aa)) form the 2Fe-2S ferredoxin-type domain. C34, C45, C48, and C67 together coordinate [2Fe-2S] cluster. In terms of domain architecture, 4Fe-4S His(Cys)3-ligated-type spans 83 to 122 (EAKQFRASVVEWLMTNHPHDCPVCEEGGHCHLQDMTVMTG). Residues H99, C103, C106, C112, C151, C154, C157, C201, C228, C231, C235, and C263 each coordinate [4Fe-4S] cluster. Residues 221 to 277 (MQFAPSICHGCSSGCNISPGERYGEIRRIENRYNGSVNHYFLCDRGRFGYGYVNRED) form the 4Fe-4S Mo/W bis-MGD-type domain.

This sequence belongs to the complex I 75 kDa subunit family. As to quaternary structure, composed of 13 different subunits. Subunits NuoCD, E, F, and G constitute the peripheral sector of the complex. [2Fe-2S] cluster is required as a cofactor. Requires [4Fe-4S] cluster as cofactor.

The enzyme catalyses a quinone + NADH + 5 H(+)(in) = a quinol + NAD(+) + 4 H(+)(out). Functionally, NDH-1 shuttles electrons from NADH, via FMN and iron-sulfur (Fe-S) centers, to quinones in the respiratory chain. The immediate electron acceptor for the enzyme in this species is believed to be ubiquinone. Couples the redox reaction to proton translocation (for every two electrons transferred, four hydrogen ions are translocated across the cytoplasmic membrane), and thus conserves the redox energy in a proton gradient. The polypeptide is NADH-quinone oxidoreductase subunit G (nuoG) (Pseudomonas aeruginosa (strain ATCC 15692 / DSM 22644 / CIP 104116 / JCM 14847 / LMG 12228 / 1C / PRS 101 / PAO1)).